The chain runs to 933 residues: Phosphoenolpyruvate carboxylase (933 aa).

Residues His-164 and Lys-595 contribute to the active site.

It belongs to the PEPCase type 1 family. It depends on Mg(2+) as a cofactor.

The catalysed reaction is oxaloacetate + phosphate = phosphoenolpyruvate + hydrogencarbonate. Functionally, forms oxaloacetate, a four-carbon dicarboxylic acid source for the tricarboxylic acid cycle. The sequence is that of Phosphoenolpyruvate carboxylase from Rhodopseudomonas palustris (strain BisB5).